The primary structure comprises 98 residues: NADH-ubiquinone oxidoreductase chain 4L (98 aa).

A run of 3 helical transmembrane segments spans residues 1–21, 29–49, and 61–81; these read MSMV…GLLV, SLLC…ITIL, and IILL…LVMV.

Belongs to the complex I subunit 4L family. Core subunit of respiratory chain NADH dehydrogenase (Complex I) which is composed of 45 different subunits.

The protein localises to the mitochondrion inner membrane. It catalyses the reaction a ubiquinone + NADH + 5 H(+)(in) = a ubiquinol + NAD(+) + 4 H(+)(out). Core subunit of the mitochondrial membrane respiratory chain NADH dehydrogenase (Complex I) which catalyzes electron transfer from NADH through the respiratory chain, using ubiquinone as an electron acceptor. Part of the enzyme membrane arm which is embedded in the lipid bilayer and involved in proton translocation. The polypeptide is NADH-ubiquinone oxidoreductase chain 4L (MT-ND4L) (Mephitis mephitis (Striped skunk)).